A 516-amino-acid polypeptide reads, in one-letter code: BAR/IMD domain-containing adapter protein 2-like 1 (516 aa).

Residues 1 to 249 enclose the IMD domain; the sequence is MSRGPEEVNR…MNMIEEIKTP (249 aa). Positions 115-148 form a coiled coil; that stretch reads MNATLKRYQAEHRNKLDSLEKSQAELKKIRRKSQ. 2 positions are modified to phosphothreonine: Thr-248 and Thr-257. Phosphoserine is present on residues Ser-261 and Ser-281. The disordered stretch occupies residues 303-328; the sequence is NPATAGQSAEKTNNSTANTGDDPSLQ. A Phosphoserine modification is found at Ser-332. Residues 340-403 form the SH3 domain; sequence MKKQKVKTIF…PSSYTKLLEE (64 aa). Residue Thr-413 is modified to Phosphothreonine. Ser-415, Ser-421, and Ser-423 each carry phosphoserine. The disordered stretch occupies residues 454–516; that stretch reads ADAAKIPSTS…TNDRSAPIIR (63 aa). Over residues 474–485 the composition is skewed to polar residues; it reads ATSTSPSDSNGT. Residues 488-516 form a binds F-actin region; that stretch reads PPFLSGENPFATVKLRPTVTNDRSAPIIR.

As to quaternary structure, interacts with RAC1. Binds to F-actin. Interacts with FASLG. Post-translationally, phosphorylated on tyrosine in response to insulin.

The protein localises to the cytoplasm. It is found in the cytoskeleton. May function as adapter protein. Involved in the formation of clusters of actin bundles. Plays a role in the reorganization of the actin cytoskeleton in response to bacterial infection. The chain is BAR/IMD domain-containing adapter protein 2-like 1 (Baiap2l1) from Rattus norvegicus (Rat).